The chain runs to 439 residues: uncharacterized protein (439 aa).

The 324-residue stretch at 116–439 (GKAASYRAAQ…PMRTPLQEAE (324 aa)) folds into the YcaO domain.

This is an uncharacterized protein from Mycobacterium tuberculosis (strain CDC 1551 / Oshkosh).